Reading from the N-terminus, the 392-residue chain is Galactose-1-phosphate uridylyltransferase (392 aa).

Residues cysteine 52 and cysteine 55 each coordinate Zn(2+). Residues alanine 61 and 77-78 (ND) contribute to the UDP-alpha-D-glucose site. Histidine 126 contacts Zn(2+). Residue asparagine 194 participates in UDP-alpha-D-glucose binding. Histidine 205 serves as a coordination point for Zn(2+). The active-site Tele-UMP-histidine intermediate is histidine 207. Glutamine 209 contributes to the UDP-alpha-D-glucose binding site. Fe cation contacts are provided by glutamate 223, histidine 323, histidine 340, and histidine 342. UDP-alpha-D-glucose-binding positions include 355–358 (KFLV) and 360–361 (YE).

The protein belongs to the galactose-1-phosphate uridylyltransferase type 1 family. Homodimer. Zn(2+) serves as cofactor.

It carries out the reaction alpha-D-galactose 1-phosphate + UDP-alpha-D-glucose = alpha-D-glucose 1-phosphate + UDP-alpha-D-galactose. It participates in carbohydrate metabolism; galactose metabolism. The polypeptide is Galactose-1-phosphate uridylyltransferase (gal-7) (Neurospora crassa (strain ATCC 24698 / 74-OR23-1A / CBS 708.71 / DSM 1257 / FGSC 987)).